The following is a 73-amino-acid chain: Venom peptide La1 (73 aa).

The residue at position 73 (K73) is a Lysine amide.

The protein belongs to the scorpion La1-like peptide family. Contains 4 disulfide bonds. In terms of tissue distribution, expressed by the venom gland.

The protein resides in the secreted. Functionally, not toxic to insect. In Liocheles australasiae (Dwarf wood scorpion), this protein is Venom peptide La1.